A 258-amino-acid polypeptide reads, in one-letter code: UPF0246 protein YaaA (258 aa).

This sequence belongs to the UPF0246 family.

The chain is UPF0246 protein YaaA from Escherichia coli (strain 55989 / EAEC).